The sequence spans 351 residues: Molybdenum import ATP-binding protein ModC (351 aa).

Residues 1-229 (MLEINIHQQL…DILADWQSET (229 aa)) enclose the ABC transporter domain. 31-38 (GRSGAGKS) is a binding site for ATP. The Mop domain occupies 290–351 (HSSIRNILNG…IYVQIKSVSL (62 aa)).

It belongs to the ABC transporter superfamily. Molybdate importer (TC 3.A.1.8) family. As to quaternary structure, the complex is composed of two ATP-binding proteins (ModC), two transmembrane proteins (ModB) and a solute-binding protein (ModA).

It localises to the cell inner membrane. The catalysed reaction is molybdate(out) + ATP + H2O = molybdate(in) + ADP + phosphate + H(+). Functionally, part of the ABC transporter complex ModABC involved in molybdenum import. Responsible for energy coupling to the transport system. In Haemophilus ducreyi (strain 35000HP / ATCC 700724), this protein is Molybdenum import ATP-binding protein ModC.